A 339-amino-acid polypeptide reads, in one-letter code: Protein LicA (339 aa).

Repeat copies occupy residues 4-7, 8-11, 12-15, 16-19, 20-23, 24-27, 28-31, 32-35, and 36-39. Residues 4–39 form a 9 X 4 AA tandem repeats of I-N-Q-S region; that stretch reads INQSINQSINQSINQSINQSINQSINQSINQSINQS.

Belongs to the peptidase S49 family.

Functionally, mediates phase variation of the LOS 6A2 and 12D9 epitopes. Phase variation of H.influenza LOS epitopes expressed by LicA is determined by a translational switch. This Haemophilus influenzae protein is Protein LicA (licA).